Reading from the N-terminus, the 131-residue chain is ATP synthase epsilon chain (131 aa).

It belongs to the ATPase epsilon chain family. In terms of assembly, F-type ATPases have 2 components, CF(1) - the catalytic core - and CF(0) - the membrane proton channel. CF(1) has five subunits: alpha(3), beta(3), gamma(1), delta(1), epsilon(1). CF(0) has three main subunits: a, b and c.

Its subcellular location is the cell inner membrane. Functionally, produces ATP from ADP in the presence of a proton gradient across the membrane. The chain is ATP synthase epsilon chain from Helicobacter hepaticus (strain ATCC 51449 / 3B1).